The chain runs to 335 residues: Matrix protein (335 aa).

This sequence belongs to the morbillivirus/respirovirus/rubulavirus M protein family.

It is found in the virion. Its function is as follows. The M protein has a crucial role in virus assembly and interacts with the RNP complex as well as with the viral membrane. This Ailuropoda melanoleuca (Giant panda) protein is Matrix protein (M).